The sequence spans 226 residues: Tyramine N-feruloyltransferase 4/11 (226 aa).

Residues 29–45 (HIYKLFYQIHEYHNYTH) form an important in binding site and for catalytic activity region. The 151-residue stretch at 72 to 222 (VLLLEVSPTP…VGDALQKYAD (151 aa)) folds into the N-acetyltransferase domain.

This sequence belongs to the acetyltransferase family. In terms of assembly, homodimer.

It localises to the cytoplasm. The enzyme catalyses tyramine + (E)-feruloyl-CoA = N-[(E)-feruloyl]tyramine + CoA + H(+). Inhibited by (2-hydroxyphenyl)amino sulfinyl acetic acid 1,1-dimethylethyl ester, by DEPC and by N-ethylmaleimide. Its function is as follows. Synthesizes amides which are involved in stress response in the cell wall. Catalyzes the synthesis of hydroxycinnamic acid amides from hydroxycinnamoyl-CoA thioesters and various hydroxyphenylethylamines such as 4-coumaroyl-CoA and sinapoyl-CoA. This is Tyramine N-feruloyltransferase 4/11 (THT4) from Nicotiana tabacum (Common tobacco).